We begin with the raw amino-acid sequence, 416 residues long: N-acetylmuramoyl-L-alanine amidase AmiC (416 aa).

The first 26 residues, 1 to 26 (MIKLTRRQIIRRTAGTLFALSPIASA), serve as a signal peptide directing secretion. The disordered stretch occupies residues 166 to 191 (RGSPEADLAQNTTPQPGRGRNGRRPV). In terms of domain architecture, MurNAc-LAA spans 192–405 (IMLDPGHGGE…CAQSIASGVQ (214 aa)).

It belongs to the N-acetylmuramoyl-L-alanine amidase 3 family.

It is found in the periplasm. It catalyses the reaction Hydrolyzes the link between N-acetylmuramoyl residues and L-amino acid residues in certain cell-wall glycopeptides.. Its function is as follows. Cell-wall hydrolase involved in septum cleavage during cell division. The sequence is that of N-acetylmuramoyl-L-alanine amidase AmiC (amiC) from Neisseria meningitidis serogroup B (strain ATCC BAA-335 / MC58).